A 184-amino-acid polypeptide reads, in one-letter code: Phosphodiesterase YfcE (184 aa).

Mn(2+) contacts are provided by Asp9, His11, Asp37, Asn73, His105, His127, and His129.

Belongs to the metallophosphoesterase superfamily. YfcE family. The cofactor is Mn(2+).

Shows phosphodiesterase activity. This Escherichia coli O157:H7 protein is Phosphodiesterase YfcE (yfcE).